Consider the following 156-residue polypeptide: Snaclec A11 (156 aa).

A signal peptide spans 1–23; that stretch reads MGRSISVSFGLLVVFLSLSGTGA. Cystine bridges form between Cys27–Cys38, Cys55–Cys154, and Cys129–Cys146. Residues 34-155 form the C-type lectin domain; that stretch reads YDQHCYQAVD…CGQPYRFTCE (122 aa).

It belongs to the snaclec family. In terms of assembly, heterodimer; disulfide-linked. Expressed by the venom gland.

The protein localises to the secreted. Its function is as follows. Interferes with one step of hemostasis (modulation of platelet aggregation, or coagulation cascade, for example). This is Snaclec A11 from Macrovipera lebetinus (Levantine viper).